The primary structure comprises 72 residues: Putative snRNP Sm-like protein (72 aa).

In terms of domain architecture, Sm spans 4-72; sequence RPLDILNNAL…RGDNVVYVSP (69 aa).

The protein belongs to the snRNP Sm proteins family.

This Methanosarcina acetivorans (strain ATCC 35395 / DSM 2834 / JCM 12185 / C2A) protein is Putative snRNP Sm-like protein.